A 506-amino-acid chain; its full sequence is Allantoinase (506 aa).

Zn(2+) contacts are provided by His105, His107, Lys195, His231, His292, and Asp366. Lys195 carries the N6-carboxylysine modification.

Belongs to the metallo-dependent hydrolases superfamily. Allantoinase family. In terms of assembly, homotetramer. Zn(2+) serves as cofactor. In terms of processing, carboxylation allows a single lysine to coordinate two zinc ions.

The enzyme catalyses (S)-allantoin + H2O = allantoate + H(+). Its pathway is nitrogen metabolism; (S)-allantoin degradation; allantoate from (S)-allantoin: step 1/1. In terms of biological role, catalyzes the conversion of allantoin (5-ureidohydantoin) to allantoate by hydrolytic cleavage of the five-member hydantoin ring. Catalyzes the first step of the ureide allantoin degradation followed by the sequential activity of AAH, UGLYAH and UAH which allows a complete purine breakdown without the intermediate generation of urea. This is Allantoinase (ALN) from Arabidopsis thaliana (Mouse-ear cress).